The following is a 327-amino-acid chain: GTPase Obg (327 aa).

In terms of domain architecture, Obg spans Met-1–Leu-159. An OBG-type G domain is found at Ala-160–Ile-327. Residues Gly-166 to Ser-173, Phe-191 to Ile-195, Asp-213 to Gly-216, Asn-280 to Glu-283, and Ser-309 to Ser-311 each bind ATP. Mg(2+)-binding residues include Ser-173 and Thr-193.

It belongs to the TRAFAC class OBG-HflX-like GTPase superfamily. OBG GTPase family. As to quaternary structure, monomer. Mg(2+) is required as a cofactor.

The protein resides in the cytoplasm. Functionally, an essential GTPase which binds GTP, GDP and possibly (p)ppGpp with moderate affinity, with high nucleotide exchange rates and a fairly low GTP hydrolysis rate. Plays a role in control of the cell cycle, stress response, ribosome biogenesis and in those bacteria that undergo differentiation, in morphogenesis control. This Prochlorococcus marinus (strain AS9601) protein is GTPase Obg.